The primary structure comprises 665 residues: DNA ligase (665 aa).

Residues 32–36 (DSEYD), 81–82 (SL), and E110 contribute to the NAD(+) site. Catalysis depends on K112, which acts as the N6-AMP-lysine intermediate. NAD(+)-binding residues include R133, E167, K283, and K307. The Zn(2+) site is built by C401, C404, C419, and C424. The 80-residue stretch at 586–665 (EGHPDFSGKT…AAFIEKQNGI (80 aa)) folds into the BRCT domain.

This sequence belongs to the NAD-dependent DNA ligase family. LigA subfamily. The cofactor is Mg(2+). Mn(2+) serves as cofactor.

It catalyses the reaction NAD(+) + (deoxyribonucleotide)n-3'-hydroxyl + 5'-phospho-(deoxyribonucleotide)m = (deoxyribonucleotide)n+m + AMP + beta-nicotinamide D-nucleotide.. Its function is as follows. DNA ligase that catalyzes the formation of phosphodiester linkages between 5'-phosphoryl and 3'-hydroxyl groups in double-stranded DNA using NAD as a coenzyme and as the energy source for the reaction. It is essential for DNA replication and repair of damaged DNA. The chain is DNA ligase from Staphylococcus epidermidis (strain ATCC 12228 / FDA PCI 1200).